The following is a 637-amino-acid chain: Glutamate--cysteine ligase catalytic subunit (637 aa).

At Met1 the chain carries N-acetylmethionine. 2 positions are modified to phosphoserine: Ser5 and Ser8.

It belongs to the glutamate--cysteine ligase type 3 family. Heterodimer of a catalytic heavy chain and a regulatory light chain.

It carries out the reaction L-cysteine + L-glutamate + ATP = gamma-L-glutamyl-L-cysteine + ADP + phosphate + H(+). The enzyme catalyses (2S)-2-aminobutanoate + L-glutamate + ATP = gamma-L-glutamyl-(2S)-2-aminobutanoate + ADP + phosphate + H(+). It functions in the pathway sulfur metabolism; glutathione biosynthesis; glutathione from L-cysteine and L-glutamate: step 1/2. Its activity is regulated as follows. Feedback inhibition by glutathione. Catalyzes the ATP-dependent ligation of L-glutamate and L-cysteine and participates in the first and rate-limiting step in glutathione biosynthesis. The chain is Glutamate--cysteine ligase catalytic subunit from Mus musculus (Mouse).